The sequence spans 919 residues: GPI ethanolamine phosphate transferase 1 (919 aa).

The Cytoplasmic portion of the chain corresponds to 1–8; the sequence is MWSRHRLY. Residues 9–29 form a helical membrane-spanning segment; that stretch reads FIVAGVLFHLFYLWSIFDIYF. Topologically, residues 30–456 are lumenal; sequence VSPLVHGMKQ…TTYNWRFIRT (427 aa). N-linked (GlcNAc...) asparagine glycosylation is found at asparagine 138, asparagine 196, asparagine 201, asparagine 285, and asparagine 311. Residues 457–477 traverse the membrane as a helical segment; it reads IVTLGFLGWIVYSFSIFLRLF. The Cytoplasmic portion of the chain corresponds to 478-487; that stretch reads ILNRDYNSHK. A helical membrane pass occupies residues 488-508; the sequence is SLLNYFIFGSLTIILNYVLYY. Topologically, residues 509-510 are lumenal; the sequence is QK. Residues 511 to 531 traverse the membrane as a helical segment; the sequence is APFNYYMYLFFPLIFWSEIFT. Residues 532–558 are Cytoplasmic-facing; the sequence is DRVVLDDGVKEFLKGISIPKRIILVSA. A helical transmembrane segment spans residues 559–579; the sequence is IILVYESIVYAFFDRWIFSLI. Residues 580 to 598 lie on the Lumenal side of the membrane; it reads FNMLSFYPLICGYRDWKRN. Residues 599-619 form a helical membrane-spanning segment; it reads TLWFITGAAISVFTLLDAVKI. Position 620 (glutamate 620) is a topological domain, cytoplasmic. Residues 621 to 641 form a helical membrane-spanning segment; sequence SLTQINIASGLIVLTALSGFL. Residues 642–653 lie on the Lumenal side of the membrane; it reads HLRKQLNSYTTT. A helical transmembrane segment spans residues 654 to 674; sequence VFICQILLVILMVLATNKSIV. Topologically, residues 675-686 are cytoplasmic; that stretch reads SLQNRTGLPRDA. Residues 687-707 form a helical membrane-spanning segment; that stretch reads QVAGWVILVVSLLLMPLIHYM. Residues 708–718 lie on the Lumenal side of the membrane; sequence KPNNNYKVRML. The helical transmembrane segment at 719–739 threads the bilayer; that stretch reads IIFLTFAPTFIILTISFESFF. Residues 740–773 are Cytoplasmic-facing; that stretch reads YLVFSAYIVQWIEIESKLKEQTPNTSHYKQLIRV. A helical transmembrane segment spans residues 774–794; the sequence is TIIGFFLLQNAFFGTGNVASI. At 795 to 815 the chain is on the lumenal side; it reads SSFSLDSVYRLMPIFDPFPMG. A helical transmembrane segment spans residues 816–836; that stretch reads ALLVIKLIIPYIILSAGLGIL. Residues 837–845 are Cytoplasmic-facing; that stretch reads NLKLHIKDY. The chain crosses the membrane as a helical span at residues 846–866; sequence TISTLIISTSDILSLNFFYLL. The Lumenal segment spans residues 867–882; the sequence is KTEGSWLDIGITISNY. A helical membrane pass occupies residues 883–903; that stretch reads CLAILSSLFMLILEIVAHVVL. Over 904–919 the chain is Cytoplasmic; sequence KNVQLSKPVIASKKTN.

Belongs to the PIGG/PIGN/PIGO family. PIGN subfamily.

The protein localises to the endoplasmic reticulum membrane. Its pathway is glycolipid biosynthesis; glycosylphosphatidylinositol-anchor biosynthesis. Ethanolamine phosphate transferase involved in glycosylphosphatidylinositol-anchor biosynthesis. Transfers ethanolamine phosphate to the first alpha-1,4-linked mannose of the glycosylphosphatidylinositol precursor of GPI-anchor. In Kluyveromyces lactis (strain ATCC 8585 / CBS 2359 / DSM 70799 / NBRC 1267 / NRRL Y-1140 / WM37) (Yeast), this protein is GPI ethanolamine phosphate transferase 1 (MCD4).